The primary structure comprises 295 residues: Porphobilinogen deaminase (295 aa).

C241 bears the S-(dipyrrolylmethanemethyl)cysteine mark.

Belongs to the HMBS family. In terms of assembly, monomer. Requires dipyrromethane as cofactor.

The enzyme catalyses 4 porphobilinogen + H2O = hydroxymethylbilane + 4 NH4(+). It participates in porphyrin-containing compound metabolism; protoporphyrin-IX biosynthesis; coproporphyrinogen-III from 5-aminolevulinate: step 2/4. Its function is as follows. Tetrapolymerization of the monopyrrole PBG into the hydroxymethylbilane pre-uroporphyrinogen in several discrete steps. The chain is Porphobilinogen deaminase from Lachnospira eligens (strain ATCC 27750 / DSM 3376 / VPI C15-48 / C15-B4) (Eubacterium eligens).